A 541-amino-acid chain; its full sequence is CTP synthase (541 aa).

Positions 1 to 265 are amidoligase domain; the sequence is MTRFIFITGG…DAVVCRHFGL (265 aa). Serine 13 contributes to the CTP binding site. UTP is bound at residue serine 13. ATP is bound at residue 14-19; the sequence is SLGKGL. Tyrosine 54 lines the L-glutamine pocket. Position 71 (aspartate 71) interacts with ATP. Mg(2+) contacts are provided by aspartate 71 and glutamate 139. Residues 146–148, 186–191, and lysine 222 each bind CTP; these read DIE and KTKPTQ. Residues 186–191 and lysine 222 each bind UTP; that span reads KTKPTQ. The 251-residue stretch at 290–540 folds into the Glutamine amidotransferase type-1 domain; the sequence is TIAIVGKYIS…IAAAVRQSRL (251 aa). Position 352 (glycine 352) interacts with L-glutamine. Catalysis depends on cysteine 379, which acts as the Nucleophile; for glutamine hydrolysis. L-glutamine contacts are provided by residues 380 to 383, glutamate 403, and arginine 468; that span reads FGMQ. Catalysis depends on residues histidine 513 and glutamate 515.

The protein belongs to the CTP synthase family. Homotetramer.

It carries out the reaction UTP + L-glutamine + ATP + H2O = CTP + L-glutamate + ADP + phosphate + 2 H(+). The enzyme catalyses L-glutamine + H2O = L-glutamate + NH4(+). It catalyses the reaction UTP + NH4(+) + ATP = CTP + ADP + phosphate + 2 H(+). The protein operates within pyrimidine metabolism; CTP biosynthesis via de novo pathway; CTP from UDP: step 2/2. Allosterically activated by GTP, when glutamine is the substrate; GTP has no effect on the reaction when ammonia is the substrate. The allosteric effector GTP functions by stabilizing the protein conformation that binds the tetrahedral intermediate(s) formed during glutamine hydrolysis. Inhibited by the product CTP, via allosteric rather than competitive inhibition. Its function is as follows. Catalyzes the ATP-dependent amination of UTP to CTP with either L-glutamine or ammonia as the source of nitrogen. Regulates intracellular CTP levels through interactions with the four ribonucleotide triphosphates. The chain is CTP synthase from Paramagnetospirillum magneticum (strain ATCC 700264 / AMB-1) (Magnetospirillum magneticum).